Here is a 493-residue protein sequence, read N- to C-terminus: 1-aminocyclopropane-1-carboxylate synthase 1 (493 aa).

K279 bears the N6-(pyridoxal phosphate)lysine mark.

This sequence belongs to the class-I pyridoxal-phosphate-dependent aminotransferase family. In terms of assembly, homodimer. Pyridoxal 5'-phosphate is required as a cofactor.

The enzyme catalyses S-adenosyl-L-methionine = 1-aminocyclopropane-1-carboxylate + S-methyl-5'-thioadenosine + H(+). It functions in the pathway alkene biosynthesis; ethylene biosynthesis via S-adenosyl-L-methionine; ethylene from S-adenosyl-L-methionine: step 1/2. Its function is as follows. Catalyzes the formation of 1-aminocyclopropane-1-carboxylate, a direct precursor of ethylene in higher plants. This chain is 1-aminocyclopropane-1-carboxylate synthase 1 (ACC1A), found in Cucurbita pepo (Vegetable marrow).